The chain runs to 181 residues: MSFSDQNLIWVDLEMTGLDPETHKIIEIASIVTDSELNILAEGPVLAVHQPEEELVKMDDWCTNTHTSSGLVERVRNSDVSEQDAVAQTIEFLEKWVPKGVSPICGNSIGQDRRFLYKHMPELEEYFHYRYLDVSTLKELTRRWKPEVLDGFSKQGTHLALDDIRESIAELKYYRETIFKI.

In terms of domain architecture, Exonuclease spans 8-171; it reads LIWVDLEMTG…DDIRESIAEL (164 aa). Residue Tyr-129 is part of the active site.

This sequence belongs to the oligoribonuclease family.

It localises to the cytoplasm. 3'-to-5' exoribonuclease specific for small oligoribonucleotides. This chain is Oligoribonuclease, found in Vibrio campbellii (strain ATCC BAA-1116).